An 873-amino-acid chain; its full sequence is Leucine--tRNA ligase (873 aa).

The 'HIGH' region signature appears at P48–H58. A 'KMSKS' region motif is present at residues K636 to S640. K639 is a binding site for ATP.

The protein belongs to the class-I aminoacyl-tRNA synthetase family.

The protein resides in the cytoplasm. The enzyme catalyses tRNA(Leu) + L-leucine + ATP = L-leucyl-tRNA(Leu) + AMP + diphosphate. The polypeptide is Leucine--tRNA ligase (Cupriavidus pinatubonensis (strain JMP 134 / LMG 1197) (Cupriavidus necator (strain JMP 134))).